A 182-amino-acid chain; its full sequence is Succinate dehydrogenase cytochrome b560 subunit, mitochondrial (182 aa).

A helical transmembrane segment spans residues 65-94; sequence LTWMLSGFHRISGCVMAGTLLVGGIGFAVL. Topologically, residues 95–114 are mitochondrial intermembrane; it reads PFDFTAFVDFIRSWNLPCAV. The helical transmembrane segment at 115–139 threads the bilayer; that stretch reads TAVFKYIIAFPIIFHTLNGIRFLGF. H129 contacts heme. The Mitochondrial matrix portion of the chain corresponds to 140 to 147; sequence DLAKGVNN. Residues 148–169 traverse the membrane as a helical segment; it reads VGQIYKSGYLVSGLSAILALAI. At 170–172 the chain is on the mitochondrial intermembrane side; sequence VFN.

The protein belongs to the cytochrome b560 family. As to quaternary structure, component of complex II composed of four subunits: a flavoprotein (FP), iron-sulfur protein (IP), and a cytochrome b560 composed of two integral membrane proteins. Requires heme as cofactor.

It localises to the mitochondrion inner membrane. Its pathway is carbohydrate metabolism; tricarboxylic acid cycle. Membrane-anchoring subunit of succinate dehydrogenase (SDH) that is involved in complex II of the mitochondrial electron transport chain and is responsible for transferring electrons from succinate to ubiquinone (coenzyme Q). Mediates resistance to enteropathogenic E.coli infection. The chain is Succinate dehydrogenase cytochrome b560 subunit, mitochondrial (mev-1) from Caenorhabditis elegans.